The primary structure comprises 189 residues: Chitin synthase 2 (189 aa).

Belongs to the chitin synthase family. Class II subfamily.

The protein resides in the cell membrane. The catalysed reaction is [(1-&gt;4)-N-acetyl-beta-D-glucosaminyl](n) + UDP-N-acetyl-alpha-D-glucosamine = [(1-&gt;4)-N-acetyl-beta-D-glucosaminyl](n+1) + UDP + H(+). Functionally, polymerizes chitin, a structural polymer of the cell wall and septum, by transferring the sugar moiety of UDP-GlcNAc to the non-reducing end of the growing chitin polymer. This is Chitin synthase 2 (CHS2) from Exophiala exophialae (Black yeast-like fungus).